The following is a 390-amino-acid chain: Aspartate beta-hydroxylase domain-containing protein 1 (390 aa).

Positions 1-54 are disordered; the sequence is MKEGRGSFSVERGPRKERETAQSGMWKGNSPAGSQGAAMEGTGGELGGQGNWGP. Over 1–72 the chain is Cytoplasmic; sequence MKEGRGSFSV…RASLIMLPWP (72 aa). The segment covering 41–51 has biased composition (gly residues); the sequence is GTGGELGGQGN. Residues 73 to 95 form a helical membrane-spanning segment; it reads LPLASSALTLLFGALTSLFLWYC. Topologically, residues 96 to 390 are lumenal; the sequence is YRLGSQDMQA…ALDFVFAPDP (295 aa). The interval 116–143 is disordered; it reads RGGPVGCSEAGGPSPGGPGDPGEGPRTE. Positions 128 to 137 are enriched in gly residues; that stretch reads PSPGGPGDPG. S129 carries the phosphoserine modification.

It belongs to the aspartyl/asparaginyl beta-hydroxylase family.

It localises to the membrane. The chain is Aspartate beta-hydroxylase domain-containing protein 1 (ASPHD1) from Homo sapiens (Human).